Consider the following 350-residue polypeptide: Protein CONSERVED ONLY IN THE GREEN LINEAGE 160, chloroplastic (350 aa).

Residues Met1 to Pro46 constitute a chloroplast transit peptide. A compositionally biased stretch (polar residues) spans Ile7–Leu26. A disordered region spans residues Ile7 to Leu58. Ser117 carries the post-translational modification Phosphoserine. 4 consecutive transmembrane segments (helical) span residues Lys213–Ile233, Ile239–Asn259, Ala276–Ala296, and Phe304–Phe324.

Its subcellular location is the plastid. The protein localises to the chloroplast thylakoid membrane. Facilitates the assembly of the membrane proton channel of the chloroplastic F-type ATPase. Specifically required for the efficient assembly and integration of the CF(0) subunit c into the chloroplastic ATPase complex in the thylakoid membrane. The protein is Protein CONSERVED ONLY IN THE GREEN LINEAGE 160, chloroplastic of Arabidopsis thaliana (Mouse-ear cress).